A 74-amino-acid polypeptide reads, in one-letter code: ATP synthase subunit 9, mitochondrial (74 aa).

The next 2 helical transmembrane spans lie at 8 to 28 and 50 to 70; these read IGAG…GNVF and ILGF…AFLI.

This sequence belongs to the ATPase C chain family. In terms of assembly, F-type ATPases have 2 components, CF(1) - the catalytic core - and CF(0) - the membrane proton channel. CF(1) has five subunits: alpha(3), beta(3), gamma(1), delta(1), epsilon(1). CF(0) has three main subunits: a, b and c.

Its subcellular location is the mitochondrion membrane. In terms of biological role, this protein is one of the chains of the nonenzymatic membrane component (F0) of mitochondrial ATPase. The protein is ATP synthase subunit 9, mitochondrial (ATP9) of Brassica napus (Rape).